A 480-amino-acid chain; its full sequence is Amino acid permease 5 (480 aa).

The interval 1–25 (MVVQNVQDLDVLPKHSSDSFDDDGR) is disordered. Residues 1 to 31 (MVVQNVQDLDVLPKHSSDSFDDDGRPKRTGT) are Cytoplasmic-facing. Positions 11-25 (VLPKHSSDSFDDDGR) are enriched in basic and acidic residues. The next 2 helical transmembrane spans lie at 32–52 (VWTASAHIITAVIGSGVLSLA) and 53–73 (WAVAQIGWIGGPVAMLLFSFV). Residues 74 to 120 (TFYTSTLLCSCYRSGDSVTGKRNYTYMDAIHSNLGGIKVKVCGVVQY) are Cytoplasmic-facing. A helical membrane pass occupies residues 121-141 (VNLFGTAIGYTIASAISLVAI). Residues 142–157 (QRTSCQQMNGPNDPCH) lie on the Extracellular side of the membrane. The chain crosses the membrane as a helical span at residues 158 to 178 (VNGNVYMIAFGIVQIIFSQIP). Topologically, residues 179–182 (DFDQ) are cytoplasmic. The chain crosses the membrane as a helical span at residues 183 to 203 (LWWLSIVAAVMSFAYSAIGLG). At 204–241 (LGVSKVVENKEIKGSLTGVTVGTVTLSGTVTSSQKIWR) the chain is on the extracellular side. A helical membrane pass occupies residues 242-262 (TFQSLGNIAFAYSYSMILIEI). Topologically, residues 263–280 (QDTVKSPPAEVNTMRKAT) are cytoplasmic. Residues 281–301 (FVSVAVTTVFYMLCGCVGYAA) traverse the membrane as a helical segment. Residues 302-328 (FGDNAPGNLLAHGGFRNPYWLLDIANL) are Extracellular-facing. The chain crosses the membrane as a helical span at residues 329–349 (AIVIHLVGAYQVYCQPLFAFV). The Cytoplasmic portion of the chain corresponds to 350–383 (EKEASRRFPESEFVTKEIKIQLFPGKPFNLNLFR). Residues 384–404 (LVWRTFFVMTTTLISMLMPFF) traverse the membrane as a helical segment. The Extracellular segment spans residues 405-406 (ND). A helical membrane pass occupies residues 407 to 427 (VVGLLGAIGFWPLTVYFPVEM). The Cytoplasmic segment spans residues 428 to 445 (YIAQKNVPRWGTKWVCLQ). The chain crosses the membrane as a helical span at residues 446-466 (VLSVTCLFVSVAAAAGSVIGI). Topologically, residues 467-480 (VSDLKVYKPFQSEF) are extracellular.

This sequence belongs to the amino acid/polyamine transporter 2 family. Amino acid/auxin permease (AAAP) (TC 2.A.18.2) subfamily. In terms of tissue distribution, expressed in leaves, stems, roots, siliques and flowers.

It is found in the cell membrane. Inhibited by 2,4-dinitrophenol. Its function is as follows. Amino acid-proton symporter. Stereospecific transporter with a broad specificity for glutamate and both neutral and basic amino acids. Reduced affinities for asparagine and valine. High affinity transport of the cationic amino acids arginine and lysine, but not of histidine. This is Amino acid permease 5 (AAP5) from Arabidopsis thaliana (Mouse-ear cress).